The primary structure comprises 338 residues: O-methyltransferase 4 (338 aa).

Residues glycine 184, aspartate 207, asparagine 230, phenylalanine 231, lysine 244, and arginine 245 each coordinate S-adenosyl-L-methionine. Catalysis depends on histidine 248, which acts as the Proton acceptor.

The protein belongs to the class I-like SAM-binding methyltransferase superfamily. Cation-independent O-methyltransferase family. COMT subfamily.

The enzyme catalyses (3,5-dichloro-2,4,6-trihydroxyphenyl)hexan-1-one + S-adenosyl-L-methionine = 1-(3,5-dichloro-2,6-dihydroxy-4-methoxyphenyl)hexan-1-one + S-adenosyl-L-homocysteine + H(+). The sequence is that of O-methyltransferase 4 (omt4) from Dictyostelium discoideum (Social amoeba).